The following is a 246-amino-acid chain: 1-(5-phosphoribosyl)-5-[(5-phosphoribosylamino)methylideneamino] imidazole-4-carboxamide isomerase (246 aa).

The Proton acceptor role is filled by aspartate 8. Catalysis depends on aspartate 131, which acts as the Proton donor.

This sequence belongs to the HisA/HisF family.

The protein localises to the cytoplasm. It catalyses the reaction 1-(5-phospho-beta-D-ribosyl)-5-[(5-phospho-beta-D-ribosylamino)methylideneamino]imidazole-4-carboxamide = 5-[(5-phospho-1-deoxy-D-ribulos-1-ylimino)methylamino]-1-(5-phospho-beta-D-ribosyl)imidazole-4-carboxamide. The protein operates within amino-acid biosynthesis; L-histidine biosynthesis; L-histidine from 5-phospho-alpha-D-ribose 1-diphosphate: step 4/9. The sequence is that of 1-(5-phosphoribosyl)-5-[(5-phosphoribosylamino)methylideneamino] imidazole-4-carboxamide isomerase from Lactococcus lactis subsp. cremoris (strain SK11).